The following is a 300-amino-acid chain: Shikimate kinase, chloroplastic (300 aa).

The N-terminal 65 residues, Met1–Ser65, are a transit peptide targeting the chloroplast. Gly111–Thr118 contacts ATP. Position 118 (Thr118) interacts with Mg(2+). Substrate is bound by residues Asp136, Arg161, and Gly183. An ATP-binding site is contributed by Arg222.

The protein belongs to the shikimate kinase family. Mg(2+) is required as a cofactor.

The protein resides in the plastid. Its subcellular location is the chloroplast. It carries out the reaction shikimate + ATP = 3-phosphoshikimate + ADP + H(+). It participates in metabolic intermediate biosynthesis; chorismate biosynthesis; chorismate from D-erythrose 4-phosphate and phosphoenolpyruvate: step 5/7. Functionally, catalyzes the specific phosphorylation of the 3-hydroxyl group of shikimic acid using ATP as a cosubstrate. The chain is Shikimate kinase, chloroplastic (SK) from Solanum lycopersicum (Tomato).